Consider the following 569-residue polypeptide: Urease subunit alpha (569 aa).

Residues 132 to 569 (GGVDTHIHFI…VPLGQRYFLF (438 aa)) enclose the Urease domain. Ni(2+)-binding residues include His137, His139, and Lys220. Lys220 carries the post-translational modification N6-carboxylysine. Residue His222 coordinates substrate. His249 and His275 together coordinate Ni(2+). His323 functions as the Proton donor in the catalytic mechanism. Asp363 lines the Ni(2+) pocket.

It belongs to the metallo-dependent hydrolases superfamily. Urease alpha subunit family. In terms of assembly, heterotrimer of UreA (gamma), UreB (beta) and UreC (alpha) subunits. Three heterotrimers associate to form the active enzyme. The cofactor is Ni cation. Carboxylation allows a single lysine to coordinate two nickel ions.

Its subcellular location is the cytoplasm. It catalyses the reaction urea + 2 H2O + H(+) = hydrogencarbonate + 2 NH4(+). Its pathway is nitrogen metabolism; urea degradation; CO(2) and NH(3) from urea (urease route): step 1/1. In Bacillus subtilis (strain 168), this protein is Urease subunit alpha.